The primary structure comprises 375 residues: Cyclic AMP receptor 2 (375 aa).

Over 1–10 (MTIMSDIIAQ) the chain is Extracellular. A helical transmembrane segment spans residues 11 to 30 (RTILLIADFSSIIGCSLVLI). Over 31–44 (GFWRLKLLRNHITK) the chain is Cytoplasmic. Residues 45 to 65 (IISLFCATSLFKDVISTIITL) form a helical membrane-spanning segment. Residues 66-82 (LYKPDQTESGFPCYLHA) lie on the Extracellular side of the membrane. A helical transmembrane segment spans residues 83-108 (IVITFGSLACWLWTLMLSFSIYNLIV). At 109–119 (RREPEPERFEK) the chain is on the cytoplasmic side. The helical transmembrane segment at 120-138 (FYFCLCYGLPLISTIVMLS) threads the bilayer. Residues 139–161 (THIIQPVGGWCWIGDNYDGYRFG) are Extracellular-facing. A helical membrane pass occupies residues 162–180 (LFYGPFFFIWGTSAILVGL). Residues 181–204 (TSKYTYSVIRSSVSDNKDKHMTYQ) lie on the Cytoplasmic side of the membrane. Ser-192 is modified (phosphoserine). Residues 205–223 (FKLINYIVVFLVCWVFAIV) form a helical membrane-spanning segment. At 224 to 234 (NRILNGLNQFP) the chain is on the extracellular side. The chain crosses the membrane as a helical span at residues 235 to 259 (TVPNVLHTYFSVSHGFYASITFIYN). The Cytoplasmic portion of the chain corresponds to 260 to 375 (NPLMWRYFGA…NNINNKNDMI (116 aa)). Phosphoserine occurs at positions 298 and 303. A disordered region spans residues 338-375 (PKENENQNHHHHHHHHHHHNHYNNNNNNNNINNKNDMI). The span at 346–358 (HHHHHHHHHHHNH) shows a compositional bias: basic residues. Positions 359 to 375 (YNNNNNNNNINNKNDMI) are enriched in low complexity.

The protein belongs to the G-protein coupled receptor 5 family. Post-translationally, C-terminal Ser or Thr residues may be phosphorylated.

Its subcellular location is the membrane. In terms of biological role, receptor for cAMP. Coordinates the aggregation of individual cells into a multicellular organism and regulates the expression of a large number of developmentally regulated genes. The activity of this receptor is mediated by G proteins. Plays a key role during tip formation and late development; involved in cAMP-directed patterning of pre stalk cells as they sort before and during tip formation. The protein is Cyclic AMP receptor 2 (carB) of Dictyostelium discoideum (Social amoeba).